The following is an 82-amino-acid chain: Translational regulator CsrA (82 aa).

It belongs to the CsrA/RsmA family. As to quaternary structure, homodimer; the beta-strands of each monomer intercalate to form a hydrophobic core, while the alpha-helices form wings that extend away from the core.

It is found in the cytoplasm. A translational regulator that binds mRNA to regulate translation initiation and/or mRNA stability. Usually binds in the 5'-UTR at or near the Shine-Dalgarno sequence preventing ribosome-binding, thus repressing translation. Its main target seems to be the major flagellin gene, while its function is anatagonized by FliW. In Brachyspira hyodysenteriae (strain ATCC 49526 / WA1), this protein is Translational regulator CsrA.